Consider the following 239-residue polypeptide: Protein GrpE (239 aa).

2 disordered regions span residues methionine 1–asparagine 54 and serine 208–valine 239. Over residues glutamine 19–glutamine 42 the composition is skewed to polar residues. Positions lysine 43 to lysine 53 are enriched in basic and acidic residues. The segment covering aspartate 228–valine 239 has biased composition (acidic residues).

It belongs to the GrpE family. Homodimer.

Its subcellular location is the cytoplasm. Its function is as follows. Participates actively in the response to hyperosmotic and heat shock by preventing the aggregation of stress-denatured proteins, in association with DnaK and GrpE. It is the nucleotide exchange factor for DnaK and may function as a thermosensor. Unfolded proteins bind initially to DnaJ; upon interaction with the DnaJ-bound protein, DnaK hydrolyzes its bound ATP, resulting in the formation of a stable complex. GrpE releases ADP from DnaK; ATP binding to DnaK triggers the release of the substrate protein, thus completing the reaction cycle. Several rounds of ATP-dependent interactions between DnaJ, DnaK and GrpE are required for fully efficient folding. In Prochlorococcus marinus (strain AS9601), this protein is Protein GrpE.